The primary structure comprises 246 residues: 3-deoxy-manno-octulosonate cytidylyltransferase (246 aa).

It belongs to the KdsB family.

It is found in the cytoplasm. The catalysed reaction is 3-deoxy-alpha-D-manno-oct-2-ulosonate + CTP = CMP-3-deoxy-beta-D-manno-octulosonate + diphosphate. It participates in nucleotide-sugar biosynthesis; CMP-3-deoxy-D-manno-octulosonate biosynthesis; CMP-3-deoxy-D-manno-octulosonate from 3-deoxy-D-manno-octulosonate and CTP: step 1/1. The protein operates within bacterial outer membrane biogenesis; lipopolysaccharide biosynthesis. In terms of biological role, activates KDO (a required 8-carbon sugar) for incorporation into bacterial lipopolysaccharide in Gram-negative bacteria. The protein is 3-deoxy-manno-octulosonate cytidylyltransferase of Rickettsia felis (strain ATCC VR-1525 / URRWXCal2) (Rickettsia azadi).